The sequence spans 262 residues: MGFLTGKRILVTGLASNRSIAYGIAKSMKEQGAELAFTYLNDKLQPRVEEFAKEFGSDIVLPLDVATDESIQNCFAELSKRWDKFDGFIHAIAFAPGDQLDGDYVNAATREGYRIAHDISAYSFVAMAQAARPYLNPNAALLTLSYLGAERAIPNYNVMCLAKASLEAATRVMAADLGKEGIRVNAISAGPIRTLAASGIKNFKKMLSTFEKTAALRRTVTIEDVGNSAAFLCSDLASGITGEIVHVDAGFSITAMGELGEE.

Residues Gly13, 19 to 20 (SI), 64 to 65 (DV), and Ile92 each bind NAD(+). Ala95 contacts substrate. Catalysis depends on proton acceptor residues Tyr146 and Tyr156. Residues Lys163 and 192-196 (IRTLA) each bind NAD(+).

This sequence belongs to the short-chain dehydrogenases/reductases (SDR) family. FabI subfamily.

The enzyme catalyses a 2,3-saturated acyl-[ACP] + NAD(+) = a (2E)-enoyl-[ACP] + NADH + H(+). It functions in the pathway lipid metabolism; fatty acid biosynthesis. Inhibited by 1,4-benzodiazepine and naphthyridinone derivatives. Functionally, catalyzes the reduction of a carbon-carbon double bond in an enoyl moiety that is covalently linked to an acyl carrier protein (ACP). Involved in the elongation cycle of fatty acid which are used in the lipid metabolism. The chain is Enoyl-[acyl-carrier-protein] reductase [NADH] FabI (fabI) from Haemophilus influenzae (strain ATCC 51907 / DSM 11121 / KW20 / Rd).